We begin with the raw amino-acid sequence, 481 residues long: UDP-N-acetylmuramoyl-L-alanyl-D-glutamate--L-lysine ligase (481 aa).

A UDP-N-acetyl-alpha-D-muramoyl-L-alanyl-D-glutamate-binding site is contributed by serine 42. Residue 118–124 (GTKGKTT) coordinates ATP. UDP-N-acetyl-alpha-D-muramoyl-L-alanyl-D-glutamate contacts are provided by residues 160–161 (TT), serine 187, and arginine 195. Lysine 229 carries the post-translational modification N6-carboxylysine. Residues 404 to 407 (DDPN) carry the L-lysine recognition motif motif.

This sequence belongs to the MurCDEF family. MurE subfamily. Carboxylation is probably crucial for Mg(2+) binding and, consequently, for the gamma-phosphate positioning of ATP.

The protein resides in the cytoplasm. The enzyme catalyses UDP-N-acetyl-alpha-D-muramoyl-L-alanyl-D-glutamate + L-lysine + ATP = UDP-N-acetyl-alpha-D-muramoyl-L-alanyl-gamma-D-glutamyl-L-lysine + ADP + phosphate + H(+). The protein operates within cell wall biogenesis; peptidoglycan biosynthesis. In terms of biological role, catalyzes the addition of L-lysine to the nucleotide precursor UDP-N-acetylmuramoyl-L-alanyl-D-glutamate (UMAG) in the biosynthesis of bacterial cell-wall peptidoglycan. The protein is UDP-N-acetylmuramoyl-L-alanyl-D-glutamate--L-lysine ligase of Streptococcus suis (strain 98HAH33).